The chain runs to 617 residues: Dihydroxy-acid dehydratase (617 aa).

Asp-81 contributes to the Mg(2+) binding site. Cys-122 contributes to the [2Fe-2S] cluster binding site. Mg(2+)-binding residues include Asp-123 and Lys-124. N6-carboxylysine is present on Lys-124. Cys-195 contributes to the [2Fe-2S] cluster binding site. Mg(2+) is bound at residue Glu-492. The Proton acceptor role is filled by Ser-518.

The protein belongs to the IlvD/Edd family. Homodimer. The cofactor is [2Fe-2S] cluster. Mg(2+) is required as a cofactor.

It carries out the reaction (2R)-2,3-dihydroxy-3-methylbutanoate = 3-methyl-2-oxobutanoate + H2O. The catalysed reaction is (2R,3R)-2,3-dihydroxy-3-methylpentanoate = (S)-3-methyl-2-oxopentanoate + H2O. The protein operates within amino-acid biosynthesis; L-isoleucine biosynthesis; L-isoleucine from 2-oxobutanoate: step 3/4. It participates in amino-acid biosynthesis; L-valine biosynthesis; L-valine from pyruvate: step 3/4. Functionally, functions in the biosynthesis of branched-chain amino acids. Catalyzes the dehydration of (2R,3R)-2,3-dihydroxy-3-methylpentanoate (2,3-dihydroxy-3-methylvalerate) into 2-oxo-3-methylpentanoate (2-oxo-3-methylvalerate) and of (2R)-2,3-dihydroxy-3-methylbutanoate (2,3-dihydroxyisovalerate) into 2-oxo-3-methylbutanoate (2-oxoisovalerate), the penultimate precursor to L-isoleucine and L-valine, respectively. This chain is Dihydroxy-acid dehydratase, found in Azorhizobium caulinodans (strain ATCC 43989 / DSM 5975 / JCM 20966 / LMG 6465 / NBRC 14845 / NCIMB 13405 / ORS 571).